A 286-amino-acid polypeptide reads, in one-letter code: MKLIAVSGGPDSMLLLDVFKHHDIVVAHVNYNKRNSSKRDQKIVEDYCFKNNIKLEILNLTDYEVKGNFHDWARKKRFDFFKLVYEKYNCDEILLAHHKDDFVETFLIQKNQKRKPLYWSIKSKNFNFGMNINRPFIHKYWKNQILKILDNKQIFFGQDETNKENIYLRNKIRNNLLNKEFLKRLIYIKILFLNFFKLRKIKKIEQDFNKWKEQNFDKQNFLKSKFQENLITIFISEKTNNSINLSRGKIQQIIKFINSEKNEKKFILNKEFYLVKAKKIIKVLKK.

7-12 (SGGPDS) is a binding site for ATP.

Belongs to the tRNA(Ile)-lysidine synthase family.

It is found in the cytoplasm. The enzyme catalyses cytidine(34) in tRNA(Ile2) + L-lysine + ATP = lysidine(34) in tRNA(Ile2) + AMP + diphosphate + H(+). In terms of biological role, ligates lysine onto the cytidine present at position 34 of the AUA codon-specific tRNA(Ile) that contains the anticodon CAU, in an ATP-dependent manner. Cytidine is converted to lysidine, thus changing the amino acid specificity of the tRNA from methionine to isoleucine. The protein is tRNA(Ile)-lysidine synthase of Mycoplasmopsis pulmonis (strain UAB CTIP) (Mycoplasma pulmonis).